We begin with the raw amino-acid sequence, 322 residues long: Putative heme-binding peroxidase (322 aa).

Histidine 38 acts as the Proton acceptor in catalysis. Histidine 162 lines the heme b pocket. Tryptophan 178 acts as the Tryptophan radical intermediate in catalysis. The segment at 288-322 (ISAPKKSNHPTGPAKGAQGGCPVAASQGGCPRAKL) is disordered.

The protein belongs to the peroxidase family. Cytochrome c peroxidase subfamily. The cofactor is heme b.

Functionally, destroys radicals which are normally produced within the cells and which are toxic to biological systems. The sequence is that of Putative heme-binding peroxidase from Aspergillus fumigatus (strain ATCC MYA-4609 / CBS 101355 / FGSC A1100 / Af293) (Neosartorya fumigata).